A 1982-amino-acid polypeptide reads, in one-letter code: MGNINSICLNNNGKYRIDSISCSLEGCKLNSKELVENMVALVDKYPLTQLLIIRECKLKQIPVNITNLSNLSELILSDNKLSQLPWSLPPPFKPNTLLSMASITNENLVRLDLSNNRFTEFPSSVFVLPNLKQLILCNNQLTNMNVTLCGGTSNNNGAHQPHIACQLEELKLSNNNFTIFPSIIGDQLTTLKSLDLSGNTITSLPNSFSNLVSLTSLNLKSNKFTCFPPSLCTLDKLVHLNLSCNQILVSPSDHTLGVSLLPSLEKLELQHNRFAHFPMDILEIVSLRVLKLQDNDIDKIPDKIGNLLNLNELFLSENKITQLPSTIGELINLRKLYLEYNKIGSLPQEFSKLSKLNILILHNNDLKFVPDQLHSLSQLLRLSLDENQLSSSDQKLIKSEGSLALIKRKNKLNYGSTMNGTGTTSSSGSASTSTHGSINKTTDILLSSVTLNNSILNQINNNNNNNNNNNNNNNNNNNSSNNNSGTNSLSSTPNGTGKSKKKLTHLTISRSLFRGNSSNLESEKEDFINKKQQQQQQQQQQQQQQQQQQQQQQQQQQQQQQQQQQLGSTASPSTASPITSHITVNSTVLDFEDDIQKMQLGLEALSNLETSIGSNNSGGGDSMNGSGGNINNSGGSGSGCGTISGSTTKQRRGSVFLPPTNAFKLSPNVVSSSYNTLPASVMSGLLQQQNLENGGVGSGSGSGSPIISANSICNSNSSSSNSLLKPPIINTTNLSTSPNLLSQSSTSFLNLPPLNQSSTNSFLPPQHQHHHHHSNLSQSLSINNLAHRLPTSLSSSSLSSNNTYDSLQFQQQQQHHHHNHNNHQNSNQPLATIVPSFSKFKNSFDQLLEEQDFSKKKRETLQKLSKEQKWNLLLQYRNSTLNMLNMKEHSNNSNNNQSIKNSTIIASTTTTTTTNGESLDGSSIQQQITKNSNFQSSRFYIDNLTSKTDISLVKEVHDFLKESGPEVSIFIGMGGIESLLGILQFNLDNAQLQFDEEKVGYCLLCLKILVECTAKSVITTNNSLNLVTMFLTSASKYIIDIIIDIYDELLRLQVIGVSVVLDSLINFQKVKGLSSPYVPLVALLRNPIIEMPTKTTVFKIINFLIYSFSVLEERFSVICSLLKVGILEVIGMFRALPHTSYSLRFELDLFEEVLDSDESELVKKIGRKEVLKRMSNEDNDLSKQSSKQSMDFVRVVMVSAGYGDLKIDLDERTSYANVIDFIQSNYQIKYSIDRYGLFVPAIGSLVLDGSILQSSGSQSRWVDPSKSLIDNGLSNEIVEFKMKPMQIQVLQSVVVVVATNHQKEDIIKEFTIDPQLKCFEIVQYLRTRLDSSSPAFQRKISVLTEDEDEDYESDIYGVYCFSSLESYDQGSWYPLNSRFLDFNPTNTPTIIDVKLMERPLRVLFSGTEKLMKFNPYVPVSELIKEIKNEIHLKINIEDYGISYVPNVSSSNLSSLIIEETWLDPTKTLLDHNDMKCSVVQFKFKPRTVSVMVLVESGIEIPTTDTPYQFVNTNSISEIIEKICTPHQLNPLSHSLYISDCQGQKIKLLSRQNCLRDQQVNNGDHLIITSKQKDLPSDFNVWDEPNDSSETITYSKDRRVSSVTLNKLIEKLTSPEYTQDSEMKTIFLSSYRSIITPSVLLSKLMERHTIPTLVDKERGKLIQRKTRLLIKSWLELETTKNREEVITLLVQNMPAQSIEDDGLKELTELFVDLSTKSYSSILPIVIGELPKCKIPKIIDSYVTFADMDEIEIARQLSLLTFPLYSRIETSELLNQRWSKPGGGPNIMSVVGLFNKISNWVSFTIVNQPKLRDRAVVYGKMVKIANAFYELRNYHLLMAIISGLNASPVLRLKYTKGKLSKNLKDNLDTLEELMSTQSSMKNYRADLAAASPPAIPFMGFHLSDLVFIDEGNQQLCDSRINFKKLEMYKKTIATLQNFSLFPYQFTPVPIIQNYFLDYKIVADKPIYEMSLSAEPRNAERYDIQ.

15 LRR repeats span residues 1 to 26 (MGNI…SLEG), 47 to 68 (LTQL…ITNL), 69 to 94 (SNLS…PFKP), 105 to 128 (NENL…VFVL), 130 to 151 (NLKQ…LCGG), 164 to 187 (ACQL…IGDQ), 188 to 210 (LTTL…SFSN), 212 to 234 (VSLT…LCTL), 236 to 257 (KLVH…HTLG), 261 to 284 (LPSL…ILEI), 286 to 307 (SLRV…IGNL), 308 to 330 (LNLN…IGEL), 331 to 352 (INLR…EFSK), 354 to 376 (SKLN…LHSL), and 378 to 399 (QLLR…LIKS). The Extracellular portion of the chain corresponds to 1–1831 (MGNINSICLN…IANAFYELRN (1831 aa)). Disordered regions lie at residues 414–436 (YGST…STHG), 457–532 (NQIN…NKKQ), and 615–654 (NNSG…RRGS). 2 stretches are compositionally biased toward low complexity: residues 415–436 (GSTM…STHG) and 457–495 (NQIN…TPNG). The LRR 16 repeat unit spans residues 443–466 (DILLSSVTLNNSILNQINNNNNNN). The segment covering 506-520 (LTISRSLFRGNSSNL) has biased composition (polar residues). Residues 515-567 (GNSSNLESEKEDFINKKQQQQQQQQQQQQQQQQQQQQQQQQQQQQQQQQQQLG) adopt a coiled-coil conformation. The LRR 17 repeat unit spans residues 592 to 615 (EDDIQKMQLGLEALSNLETSIGSN). The span at 616-642 (NSGGGDSMNGSGGNINNSGGSGSGCGT) shows a compositional bias: gly residues. LRR repeat units follow at residues 657 to 684 (LPPT…VMSG) and 773 to 796 (HSNL…LSSS). Disordered regions lie at residues 756–778 (QSST…NLSQ) and 807–829 (LQFQ…SNQP). Residues 832–1236 (TIVPSFSKFK…QIKYSIDRYG (405 aa)) enclose the GBD/FH3 domain. 4 LRR repeats span residues 979–1003 (LLGI…GYCL), 1075–1100 (SPYV…VFKI), 1239–1263 (VPAI…RWVD), and 1689–1712 (VQNM…FVDL). An N-terminal Ras-GEF domain is found at 1595-1717 (KDRRVSSVTL…LFVDLSTKSY (123 aa)). One can recognise a Ras-GEF domain in the interval 1747–1974 (DEIEIARQLS…YEMSLSAEPR (228 aa)). Residues 1832–1848 (YHLLMAIISGLNASPVL) traverse the membrane as a helical segment. Residues 1849 to 1982 (RLKYTKGKLS…PRNAERYDIQ (134 aa)) lie on the Cytoplasmic side of the membrane. 2 LRR repeats span residues 1865 to 1888 (LDTL…LAAA) and 1917 to 1941 (RINF…LFPY).

Its subcellular location is the membrane. Its function is as follows. Promotes the exchange of Ras-bound GDP by GTP. The sequence is that of Ras guanine nucleotide exchange factor V (gefV) from Dictyostelium discoideum (Social amoeba).